The following is a 963-amino-acid chain: Protein bicaudal C homolog 1-A (963 aa).

Residues methionine 1–arginine 48 form a disordered region. The segment covering methionine 12 to glutamate 22 has biased composition (polar residues). The segment covering aspartate 35–arginine 48 has biased composition (basic and acidic residues). KH domains are found at residues arginine 128 to isoleucine 195 and proline 280 to leucine 344. The segment covering glutamate 592–serine 601 has biased composition (polar residues). Disordered stretches follow at residues glutamate 592–glutamate 613, glutamate 668–serine 713, and leucine 767–alanine 834. 2 stretches are compositionally biased toward basic and acidic residues: residues serine 602–proline 612 and valine 683–glutamate 696. A compositionally biased stretch (low complexity) spans glutamate 784 to leucine 797. Positions isoleucine 812 to glycine 824 are enriched in polar residues. The SAM domain occupies phenylalanine 862 to asparagine 925.

This sequence belongs to the BicC family.

Functionally, putative RNA-binding protein. May be involved in regulating gene expression during embryonic development. Seems to be involved in endoderm formation. Ectopic expression results in endoderm formation in the absence of mesoderm induction. The polypeptide is Protein bicaudal C homolog 1-A (bicc1-a) (Xenopus laevis (African clawed frog)).